The following is a 665-amino-acid chain: Lamin-A (665 aa).

Met1 bears the N-acetylmethionine mark. Positions 1 to 29 are head; that stretch reads METPGQKRATRSTHTPLSPTRITRLQEKE. Phosphoserine is present on Ser18. In terms of domain architecture, IF rod spans 27–383; it reads EKEDLQGLND…KLLEGEEERL (357 aa). The interval 30–66 is coil 1A; it reads DLQGLNDRLAVYIDKVRSLELENARLRLRITESEDVI. Positions 67–76 are linker 1; that stretch reads SREVTGIKSA. The segment at 77-214 is coil 1B; that stretch reads YETELADARK…SIYNEEMRET (138 aa). The segment at 215–238 is linker 2; it reads KRRHETRLVEVDNGRQREFESKLA. The tract at residues 239–383 is coil 2; sequence DALHELRAQH…KLLEGEEERL (145 aa). 3 disordered regions span residues 381–441, 550–581, and 602–641; these read ERLR…SVEE, DDED…GEYN, and ASQG…LGES. Residues 384-664 form a tail region; the sequence is RLSPSPNTQK…AQVAPQNCSI (281 aa). Ser388 bears the Phosphoserine mark. A compositionally biased stretch (low complexity) spans 399–411; sequence IASHSGAHISSSA. The short motif at 413–418 is the Nuclear localization signal element; it reads KRRRLE. The 118-residue stretch at 425–542 folds into the LTD domain; that stretch reads SSFTQHARTT…EEVAMRKLVR (118 aa). Residues 427 to 436 are compositionally biased toward polar residues; that stretch reads FTQHARTTGK. Residues 605–630 show a composition bias toward low complexity; it reads GSGLVTGSSGSSSSSVTLTRTYRSTG. At Cys662 the chain carries Cysteine methyl ester. A lipid anchor (S-farnesyl cysteine) is attached at Cys662. The propeptide at 663-665 is removed in mature form; it reads SIM.

This sequence belongs to the intermediate filament family. In terms of assembly, homodimer. Lamin dimers then assemble into dimeric head-to-tail polymers. Ultimately, two head-to-tail polymers assemble laterally into a protofilament with a uniformly shaped rod of 3.5 nm in diameter. Phosphorylation plays a key role in lamin organization, subcellular localization and nuclear envelope disintegration. Phosphorylation by CDK1 at Ser-18 at the onset of mitosis drives lamin disassembly and nuclear envelope breakdown.

Its subcellular location is the nucleus lamina. The protein localises to the nucleus envelope. It localises to the nucleus. The protein resides in the nucleoplasm. It is found in the nucleus matrix. Lamins are intermediate filament proteins that assemble into a filamentous meshwork, and which constitute the major components of the nuclear lamina, a fibrous layer on the nucleoplasmic side of the inner nuclear membrane. Lamins provide a framework for the nuclear envelope, bridging the nuclear envelope and chromatin, thereby playing an important role in nuclear assembly, chromatin organization, nuclear membrane and telomere dynamics. The structural integrity of the lamina is strictly controlled by the cell cycle, as seen by the disintegration and formation of the nuclear envelope in prophase and telophase, respectively. This chain is Lamin-A (lmna), found in Xenopus laevis (African clawed frog).